The following is a 295-amino-acid chain: 4-hydroxy-tetrahydrodipicolinate synthase (295 aa).

Thr47 provides a ligand contact to pyruvate. Tyr135 serves as the catalytic Proton donor/acceptor. The active-site Schiff-base intermediate with substrate is the Lys163. Residue Ile206 coordinates pyruvate.

Belongs to the DapA family. Homodimer.

The protein localises to the cytoplasm. It carries out the reaction L-aspartate 4-semialdehyde + pyruvate = (2S,4S)-4-hydroxy-2,3,4,5-tetrahydrodipicolinate + H2O + H(+). The protein operates within amino-acid biosynthesis; L-lysine biosynthesis via DAP pathway; (S)-tetrahydrodipicolinate from L-aspartate: step 3/4. Is not feedback inhibited by lysine. Catalyzes the condensation of (S)-aspartate-beta-semialdehyde [(S)-ASA] and pyruvate to 4-hydroxy-tetrahydrodipicolinate (HTPA). This is 4-hydroxy-tetrahydrodipicolinate synthase from Staphylococcus aureus (strain COL).